A 105-amino-acid polypeptide reads, in one-letter code: Small ribosomal subunit protein uS10 (105 aa).

Belongs to the universal ribosomal protein uS10 family. As to quaternary structure, part of the 30S ribosomal subunit.

In terms of biological role, involved in the binding of tRNA to the ribosomes. This chain is Small ribosomal subunit protein uS10, found in Desulfotalea psychrophila (strain LSv54 / DSM 12343).